Reading from the N-terminus, the 429-residue chain is Formate-dependent phosphoribosylglycinamide formyltransferase (429 aa).

Residues 26–27 and glutamate 86 contribute to the N(1)-(5-phospho-beta-D-ribosyl)glycinamide site; that span reads EL. ATP contacts are provided by residues arginine 118, lysine 159, 199-202, and glutamate 207; that span reads EEHI. In terms of domain architecture, ATP-grasp spans 123–319; the sequence is ETLVKEAKVP…EFGLHLRAVL (197 aa). Mg(2+) is bound by residues glutamate 276 and glutamate 288. N(1)-(5-phospho-beta-D-ribosyl)glycinamide contacts are provided by residues aspartate 295, lysine 375, and 382–383; that span reads RR.

It belongs to the PurK/PurT family. Homodimer.

It catalyses the reaction N(1)-(5-phospho-beta-D-ribosyl)glycinamide + formate + ATP = N(2)-formyl-N(1)-(5-phospho-beta-D-ribosyl)glycinamide + ADP + phosphate + H(+). It participates in purine metabolism; IMP biosynthesis via de novo pathway; N(2)-formyl-N(1)-(5-phospho-D-ribosyl)glycinamide from N(1)-(5-phospho-D-ribosyl)glycinamide (formate route): step 1/1. In terms of biological role, involved in the de novo purine biosynthesis. Catalyzes the transfer of formate to 5-phospho-ribosyl-glycinamide (GAR), producing 5-phospho-ribosyl-N-formylglycinamide (FGAR). Formate is provided by PurU via hydrolysis of 10-formyl-tetrahydrofolate. The sequence is that of Formate-dependent phosphoribosylglycinamide formyltransferase from Pyrococcus abyssi (strain GE5 / Orsay).